A 445-amino-acid chain; its full sequence is Xylose isomerase (445 aa).

Residues His107 and Asp110 contribute to the active site. Positions 238, 274, 277, 302, 313, 315, and 345 each coordinate Mg(2+).

The protein belongs to the xylose isomerase family. As to quaternary structure, homotetramer. Mg(2+) serves as cofactor.

Its subcellular location is the cytoplasm. The catalysed reaction is alpha-D-xylose = alpha-D-xylulofuranose. In Bacillus velezensis (strain DSM 23117 / BGSC 10A6 / LMG 26770 / FZB42) (Bacillus amyloliquefaciens subsp. plantarum), this protein is Xylose isomerase.